A 366-amino-acid polypeptide reads, in one-letter code: NADH-quinone oxidoreductase subunit D (366 aa).

This sequence belongs to the complex I 49 kDa subunit family. As to quaternary structure, NDH-1 is composed of 14 different subunits. Subunits NuoB, C, D, E, F, and G constitute the peripheral sector of the complex.

The protein localises to the cell membrane. It carries out the reaction a quinone + NADH + 5 H(+)(in) = a quinol + NAD(+) + 4 H(+)(out). Its function is as follows. NDH-1 shuttles electrons from NADH, via FMN and iron-sulfur (Fe-S) centers, to quinones in the respiratory chain. The immediate electron acceptor for the enzyme in this species is believed to be a menaquinone. Couples the redox reaction to proton translocation (for every two electrons transferred, four hydrogen ions are translocated across the cytoplasmic membrane), and thus conserves the redox energy in a proton gradient. This is NADH-quinone oxidoreductase subunit D from Desulforamulus reducens (strain ATCC BAA-1160 / DSM 100696 / MI-1) (Desulfotomaculum reducens).